The following is a 560-amino-acid chain: Dimethylaniline monooxygenase [N-oxide-forming] 4 (560 aa).

Residues 9-13, glutamate 32, and 40-41 each bind FAD; these read GAGVS and LW. Residues 60 to 61 and 195 to 198 each bind NADP(+); these read TN and TGGD. Residues 510 to 530 traverse the membrane as a helical segment; the sequence is LSHYLIAWGAPVLLVSLLLIY.

This sequence belongs to the FMO family. Requires FAD as cofactor.

It is found in the microsome membrane. The protein resides in the endoplasmic reticulum membrane. It carries out the reaction N,N-dimethylaniline + NADPH + O2 + H(+) = N,N-dimethylaniline N-oxide + NADP(+) + H2O. Its function is as follows. This protein is involved in the oxidative metabolism of a variety of xenobiotics such as drugs and pesticides. The chain is Dimethylaniline monooxygenase [N-oxide-forming] 4 (Fmo4) from Mus musculus (Mouse).